The chain runs to 179 residues: MTETIKVSESLELHAVAENHVKPLYQLICKNKTWLQQSLNWPQFVQSEEDTRKTVQGNVMLHQRGYAKMFMIFKEDELIGVISFNRIEPLNKTAEIGYWLDESHQGQGIISQALQALIHHYAQSGELRRFVIKCRVDNPQSNQVALRNGFILEGCLKQAEFLNDAYDDVNLYARIIDSQ.

The N-acetyltransferase domain occupies 11–172 (LELHAVAENH…NDAYDDVNLY (162 aa)).

This sequence belongs to the acetyltransferase family. RimL subfamily.

The protein resides in the cytoplasm. The enzyme catalyses N-terminal L-seryl-[ribosomal protein bL12] + acetyl-CoA = N-terminal N(alpha)-acetyl-L-seryl-[ribosomal protein bL12] + CoA + H(+). In terms of biological role, this enzyme acetylates the N-terminal serine of ribosomal protein bL12, converting it into the acetylated form of bL12 known as bL7. In Escherichia coli (strain K12), this protein is Ribosomal-protein-serine acetyltransferase.